Reading from the N-terminus, the 301-residue chain is MTTLDDKLLGEKLQYYYSTSEDEDSDHEDKDRGRGAPASSSTPAEAELAGEGISVNTGPKGVINDWRRFKQLETEQREEQCREMERLIKKLSMSCRSHLDEEEEQQKQKDLQEKISGKMTLKECGMMDKNLDDEEFLQQYRKQRMDEMRQQLHKGPQFKQVLEIPSGEGFLDMIDKEQKSTLIMVHIYEDGVPGTEAMNGCMICLAAEYPTVKFCRVRSSVIGASSRFTRNALPALLIYKAGELIGNFVRVTDQLGEDFFAVDLEAFLQEFGLLPEKEVLVLTSVRNSATCHSEDSDLEID.

Thr-2 is subject to N-acetylthreonine. A disordered region spans residues 15-60 (YYYSTSEDEDSDHEDKDRGRGAPASSSTPAEAELAGEGISVNTGPK). A phosphoserine mark is found at Ser-20 and Ser-25. Residues 36–49 (APASSSTPAEAELA) are compositionally biased toward low complexity. Positions 36-299 (APASSSTPAE…TCHSEDSDLE (264 aa)) constitute a Phosducin domain. The tract at residues 158 to 301 (FKQVLEIPSG…HSEDSDLEID (144 aa)) is thioredoxin fold. Residues Ser-226, Ser-293, and Ser-296 each carry the phosphoserine modification.

The protein belongs to the phosducin family. As to quaternary structure, interacts with the CCT chaperonin complex. Forms a complex with the beta and gamma subunits of the GTP-binding protein, transducin.

Its subcellular location is the cell projection. The protein localises to the cilium. In terms of biological role, functions as a co-chaperone for CCT in the assembly of heterotrimeric G protein complexes, facilitates the assembly of both Gbeta-Ggamma and RGS-Gbeta5 heterodimers. Also acts as a positive regulator of hedgehog signaling and regulates ciliary function. This Rattus norvegicus (Rat) protein is Phosducin-like protein (Pdcl).